Here is a 249-residue protein sequence, read N- to C-terminus: Ubiquinone/menaquinone biosynthesis C-methyltransferase UbiE (249 aa).

Residues Thr72, Asp93, and 121–122 (DA) contribute to the S-adenosyl-L-methionine site.

The protein belongs to the class I-like SAM-binding methyltransferase superfamily. MenG/UbiE family.

The enzyme catalyses a 2-demethylmenaquinol + S-adenosyl-L-methionine = a menaquinol + S-adenosyl-L-homocysteine + H(+). The catalysed reaction is a 2-methoxy-6-(all-trans-polyprenyl)benzene-1,4-diol + S-adenosyl-L-methionine = a 5-methoxy-2-methyl-3-(all-trans-polyprenyl)benzene-1,4-diol + S-adenosyl-L-homocysteine + H(+). The protein operates within quinol/quinone metabolism; menaquinone biosynthesis; menaquinol from 1,4-dihydroxy-2-naphthoate: step 2/2. Its pathway is cofactor biosynthesis; ubiquinone biosynthesis. Its function is as follows. Methyltransferase required for the conversion of demethylmenaquinol (DMKH2) to menaquinol (MKH2) and the conversion of 2-polyprenyl-6-methoxy-1,4-benzoquinol (DDMQH2) to 2-polyprenyl-3-methyl-6-methoxy-1,4-benzoquinol (DMQH2). In Teredinibacter turnerae (strain ATCC 39867 / T7901), this protein is Ubiquinone/menaquinone biosynthesis C-methyltransferase UbiE.